Consider the following 373-residue polypeptide: Putative 8-amino-7-oxononanoate synthase (373 aa).

Arginine 18 lines the substrate pocket. 93–94 (GF) contributes to the pyridoxal 5'-phosphate binding site. Histidine 118 contacts substrate. Pyridoxal 5'-phosphate-binding positions include serine 166, 191 to 194 (DEAH), and 220 to 223 (TLSK). Lysine 223 bears the N6-(pyridoxal phosphate)lysine mark. Threonine 337 contributes to the substrate binding site.

Belongs to the class-II pyridoxal-phosphate-dependent aminotransferase family. BioF subfamily. As to quaternary structure, homodimer. Pyridoxal 5'-phosphate is required as a cofactor.

It catalyses the reaction 6-carboxyhexanoyl-[ACP] + L-alanine + H(+) = (8S)-8-amino-7-oxononanoate + holo-[ACP] + CO2. Its pathway is cofactor biosynthesis; biotin biosynthesis. In terms of biological role, catalyzes the decarboxylative condensation of pimeloyl-[acyl-carrier protein] and L-alanine to produce 8-amino-7-oxononanoate (AON), [acyl-carrier protein], and carbon dioxide. The polypeptide is Putative 8-amino-7-oxononanoate synthase (bioF) (Aquifex aeolicus (strain VF5)).